The chain runs to 360 residues: Peptide chain release factor 1 (360 aa).

Gln-235 is modified (N5-methylglutamine).

The protein belongs to the prokaryotic/mitochondrial release factor family. Methylated by PrmC. Methylation increases the termination efficiency of RF1.

It is found in the cytoplasm. Peptide chain release factor 1 directs the termination of translation in response to the peptide chain termination codons UAG and UAA. The polypeptide is Peptide chain release factor 1 (Bordetella parapertussis (strain 12822 / ATCC BAA-587 / NCTC 13253)).